The primary structure comprises 639 residues: Pheromone B alpha 1 receptor (639 aa).

The next 7 membrane-spanning stretches (helical) occupy residues 8-28, 37-57, 70-90, 113-133, 163-183, 209-229, and 272-292; these read LFPIFAFLGFVLAILPLPWHL, FFMMWTALGCLNQFINSVAWA, ISIRILMGASVGIPASSLCII, ILVDALICVLFPLVYIALQYI, VWPVLLGLISATYGVMALLQF, MALALTEMMCTMPLGIFVIVL, and LTRWCAPVSAFIFFFYFGFAE. Disordered regions lie at residues 375–416, 490–516, 532–563, and 611–639; these read PRPM…SSPI, TVPHHSTADEPASPALPDTPSSCSSSA, SADVTRRDSGSSAGGVASTSRPTRAGPPRLPS, and TTAGAPATTTPDRGEPDVPTSPRTHRASV. The segment covering 383 to 398 has biased composition (low complexity); that stretch reads SSSGFSSSDSTRFGSS. Composition is skewed to low complexity over residues 541-551 and 611-621; these read GSSAGGVASTS and TTAGAPATTTP.

It belongs to the G-protein coupled receptor 4 family.

Its subcellular location is the membrane. Its function is as follows. Receptor for the BAP1 pheromone, a prenylated mating factor. Has a role in the initiation of B-regulated nuclear migration. The sequence is that of Pheromone B alpha 1 receptor (BAR1) from Schizophyllum commune (Split gill fungus).